The following is a 240-amino-acid chain: Aldehyde dehydrogenase, cytosolic 2 (240 aa).

Catalysis depends on residues Glu-8 and Cys-42. Lys-106, Lys-149, Lys-151, and Lys-174 each carry N6-acetyllysine.

This sequence belongs to the aldehyde dehydrogenase family. Homotetramer. In terms of tissue distribution, non-lens specific, predominant form expressed in the liver.

The protein resides in the cytoplasm. The enzyme catalyses an aldehyde + NAD(+) + H2O = a carboxylate + NADH + 2 H(+). The protein operates within alcohol metabolism; ethanol degradation; acetate from ethanol: step 2/2. Elephant shrews, in contrast to other mammals, possess both a lens- and a non-lens specific class-1 aldehyde dehydrogenase. Can convert/oxidize retinaldehyde to retinoic acid. This Macroscelides proboscideus (Short-eared elephant shrew) protein is Aldehyde dehydrogenase, cytosolic 2.